We begin with the raw amino-acid sequence, 196 residues long: Guanylate kinase (196 aa).

The region spanning 7–191 is the Guanylate kinase-like domain; sequence RNIVLLVGPS…AAEEIEKIIL (185 aa). An ATP-binding site is contributed by 14–21; the sequence is GPSGVGKG.

This sequence belongs to the guanylate kinase family.

The protein localises to the cytoplasm. It catalyses the reaction GMP + ATP = GDP + ADP. Functionally, essential for recycling GMP and indirectly, cGMP. The protein is Guanylate kinase of Mycoplasmopsis pulmonis (strain UAB CTIP) (Mycoplasma pulmonis).